The following is a 690-amino-acid chain: NF-kappa-B-repressing factor (690 aa).

The segment at 1 to 296 (MEKILQMAEG…FKHTFGEDLV (296 aa)) is active repression domain. Positions 25–45 (KPSKGQKRHLSTCDGQNPPKK) match the Nuclear localization signal motif. Disordered stretches follow at residues 27-87 (SKGQ…NEQT) and 132-163 (MYFD…QTFP). K68 participates in a covalent cross-link: Glycyl lysine isopeptide (Lys-Gly) (interchain with G-Cter in SUMO2). Residues 142–163 (STTSQQANSQSTPEPSPSQTFP) are compositionally biased toward low complexity. A DNA-binding region spans residues 296-388 (VVCQIGMSSY…RVFLQDHCLA (93 aa)). Polar residues predominate over residues 414–431 (PTYPSVKSSQCHTGSSPR). Positions 414–437 (PTYPSVKSSQCHTGSSPRGSGKKK) are disordered. K500 is covalently cross-linked (Glycyl lysine isopeptide (Lys-Gly) (interchain with G-Cter in SUMO2)). Positions 551-596 (EDNIGNQLLRKMGWTGGGLGKSGEGIREPISVKEQHKREGLGLDVE) constitute a G-patch domain. The region spanning 600-664 (KIAKRDIEQI…DRYLVVGRKR (65 aa)) is the R3H domain. S618 bears the Phosphoserine mark. Glycyl lysine isopeptide (Lys-Gly) (interchain with G-Cter in SUMO2) cross-links involve residues K666 and K674.

In terms of assembly, interacts with NF-kappa-B. Interacts with XRN2. Interacts (via G-patch domain) with DHX15; promoting the RNA helicase activity of DHX15. As to expression, widely and constitutively expressed. Expressed at lower level in colon, peripheral blood lymphocytes, lung and kidney.

The protein resides in the nucleus. It localises to the nucleolus. Functionally, enhances the ATPase activity of DHX15 by acting like a brace that tethers mobile sections of DHX15 together, stabilizing a functional conformation with high RNA affinity of DHX15. Involved in the constitutive silencing of the interferon beta promoter, independently of the virus-induced signals, and in the inhibition of the basal and cytokine-induced iNOS promoter activity. Also involved in the regulation of IL-8 transcription. May also act as a DNA-binding transcription regulator: interacts with a specific negative regulatory element (NRE) 5'-AATTCCTCTGA-3' to mediate transcriptional repression of certain NK-kappa-B responsive genes. The sequence is that of NF-kappa-B-repressing factor from Homo sapiens (Human).